The primary structure comprises 446 residues: Probable carboxylesterase 16 (446 aa).

The interval 84–131 is disordered; the sequence is PEPDSLRHKDNYNHQPRSDRRHSYGPNHNSPAPAERNESRRNSYGCNN. Residues 87–105 are compositionally biased toward basic and acidic residues; sequence DSLRHKDNYNHQPRSDRRH. Positions 158–160 match the Involved in the stabilization of the negatively charged intermediate by the formation of the oxyanion hole motif; that stretch reads HGG. Active-site residues include S274, D378, and H408.

This sequence belongs to the 'GDXG' lipolytic enzyme family. In terms of tissue distribution, expressed in roots, leaves, stems, flowers and siliques.

The catalysed reaction is a carboxylic ester + H2O = an alcohol + a carboxylate + H(+). Its function is as follows. Carboxylesterase acting on esters with varying acyl chain length. The protein is Probable carboxylesterase 16 (CXE16) of Arabidopsis thaliana (Mouse-ear cress).